We begin with the raw amino-acid sequence, 419 residues long: L-rhamnose isomerase (419 aa).

Residues His262, Asp294, and Asp296 each contribute to the Mn(2+) site.

Belongs to the rhamnose isomerase family. As to quaternary structure, homotetramer. The cofactor is Mn(2+).

The protein localises to the cytoplasm. It carries out the reaction L-rhamnopyranose = L-rhamnulose. It participates in carbohydrate degradation; L-rhamnose degradation; glycerone phosphate from L-rhamnose: step 1/3. Its function is as follows. Catalyzes the interconversion of L-rhamnose and L-rhamnulose. The chain is L-rhamnose isomerase from Salmonella typhi.